The primary structure comprises 767 residues: Probable NADP-dependent malic enzyme (767 aa).

A malic enzyme region spans residues 1-430 (MDEMNKINYT…QLGSRLNPTA (430 aa)). Tyr-42 serves as the catalytic Proton donor. Lys-97 serves as the catalytic Proton acceptor. Residues Glu-139, Asp-140, and Asp-165 each contribute to the a divalent metal cation site. NADP(+) is bound by residues 198-201 (AGAA), Asn-290, and Asn-322. The interval 431–767 (NYMNFLAEKI…FACVEAIKEV (337 aa)) is phosphate acetyltransferase.

The protein in the N-terminal section; belongs to the malic enzymes family. It in the C-terminal section; belongs to the phosphate acetyltransferase and butyryltransferase family. It depends on Mg(2+) as a cofactor. The cofactor is Mn(2+).

The catalysed reaction is (S)-malate + NADP(+) = pyruvate + CO2 + NADPH. It carries out the reaction oxaloacetate + H(+) = pyruvate + CO2. The sequence is that of Probable NADP-dependent malic enzyme from Rickettsia prowazekii (strain Madrid E).